The chain runs to 342 residues: Glucokinase (342 aa).

Residue Gly7–Thr12 participates in ATP binding.

It belongs to the bacterial glucokinase family.

The protein resides in the cytoplasm. The enzyme catalyses D-glucose + ATP = D-glucose 6-phosphate + ADP + H(+). The polypeptide is Glucokinase (Nostoc sp. (strain PCC 7120 / SAG 25.82 / UTEX 2576)).